Reading from the N-terminus, the 287-residue chain is F-actin-capping protein subunit beta (287 aa).

Ser-2 carries the post-translational modification N-acetylserine. A phosphoserine mark is found at Ser-85 and Ser-92.

It belongs to the F-actin-capping protein beta subunit family. In terms of assembly, component of the F-actin capping complex, composed of a heterodimer of an alpha and a beta subunit. Interacts with BSP1 (via C-terminus); leading to recruitment of the F-actin capping complex to actin cortical patches and the acomyosin contractile ring.

It localises to the cytoplasm. It is found in the cytoskeleton. The protein localises to the actin patch. Its subcellular location is the bud. The protein resides in the bud tip. In terms of biological role, F-actin-capping proteins bind in a Ca(2+)-independent manner to the fast growing ends of actin filaments (barbed end) thereby blocking the exchange of subunits at these ends. Unlike other capping proteins (such as gelsolin and severin), these proteins do not sever actin filaments. The chain is F-actin-capping protein subunit beta (CAP2) from Saccharomyces cerevisiae (strain ATCC 204508 / S288c) (Baker's yeast).